A 1211-amino-acid chain; its full sequence is Periplasmic acid trehalase ATC1 (1211 aa).

Residues 1–46 (MKRIRSLWFNAEASYSNLNNSPSLRNKNSTGNNSRSKNYRSFSRFD) lie on the Cytoplasmic side of the membrane. Residues 47–67 (LINSILLLMMLFLLAIFVTAL) form a helical membrane-spanning segment. The Periplasmic portion of the chain corresponds to 68–1211 (YLTKSSRLTY…ATIKEIVLND (1144 aa)). The segment at 70-131 (TKSSRLTYSH…NTAYYDDENM (62 aa)) is required for cell surface targeting. N-linked (GlcNAc...) asparagine glycosylation is found at N98, N207, N238, N247, N255, N259, N325, N370, N376, and N488. 513–514 (WD) is a binding site for substrate. Residues N539, N568, N628, and N638 are each glycosylated (N-linked (GlcNAc...) asparagine). Catalysis depends on E644, which acts as the Proton donor. 2 N-linked (GlcNAc...) asparagine glycosylation sites follow: N696 and N705. Position 711–712 (711–712 (KQ)) interacts with substrate. N879, N897, N910, N972, N990, N1031, N1049, N1064, N1147, and N1157 each carry an N-linked (GlcNAc...) asparagine glycan.

This sequence belongs to the glycosyl hydrolase 65 family. Post-translationally, glycosylated.

Its subcellular location is the membrane. The protein resides in the vacuole lumen. It localises to the periplasm. It carries out the reaction alpha,alpha-trehalose + H2O = alpha-D-glucose + beta-D-glucose. Its function is as follows. Periplasmic acid trehalase that catalyzes hydrolysis of the disaccharide trehalose and required for growth on trehalose as carbon source. Growth on trehalose is strictly respiratory. This is Periplasmic acid trehalase ATC1 from Saccharomyces cerevisiae (strain CEN.PK113-7D) (Baker's yeast).